A 934-amino-acid polypeptide reads, in one-letter code: Phosphoenolpyruvate carboxylase (934 aa).

Active-site residues include His161 and Lys593.

Belongs to the PEPCase type 1 family. The cofactor is Mg(2+).

The enzyme catalyses oxaloacetate + phosphate = phosphoenolpyruvate + hydrogencarbonate. Its function is as follows. Forms oxaloacetate, a four-carbon dicarboxylic acid source for the tricarboxylic acid cycle. The chain is Phosphoenolpyruvate carboxylase (ppc) from Mycobacterium leprae (strain TN).